Consider the following 88-residue polypeptide: DNA-directed RNA polymerase subunit omega (88 aa).

It belongs to the RNA polymerase subunit omega family. The RNAP catalytic core consists of 2 alpha, 1 beta, 1 beta' and 1 omega subunit. When a sigma factor is associated with the core the holoenzyme is formed, which can initiate transcription.

The enzyme catalyses RNA(n) + a ribonucleoside 5'-triphosphate = RNA(n+1) + diphosphate. In terms of biological role, promotes RNA polymerase assembly. Latches the N- and C-terminal regions of the beta' subunit thereby facilitating its interaction with the beta and alpha subunits. The chain is DNA-directed RNA polymerase subunit omega from Yersinia pestis (strain Pestoides F).